An 82-amino-acid chain; its full sequence is Large ribosomal subunit protein uL23 (82 aa).

It belongs to the universal ribosomal protein uL23 family. Part of the 50S ribosomal subunit. Contacts protein L29.

In terms of biological role, binds to 23S rRNA. One of the proteins that surrounds the polypeptide exit tunnel on the outside of the ribosome. The protein is Large ribosomal subunit protein uL23 of Methanococcoides burtonii (strain DSM 6242 / NBRC 107633 / OCM 468 / ACE-M).